Consider the following 580-residue polypeptide: MSENRKPLLGFVSKLTSGTALGNSGKTHCPLCLGLFKAPRLLPCLHTVCTTCLEQLEPFSVVDIRGGDSDTSSEGSIFQELKPRSLQSQIGILCPVCDAQVDLPMGGVKALTIDHLAVNDVMLESLRGEGQGLVCDLCNDREVEKRCQTCKANLCHFCCQAHRRQKKTTYHTMVDLKDLKGYSRIGKPILCPVHPAEELRLFCEFCDRPVCQDCVVGEHREHPCDFTSNVIHKHGDSVWELLKGTQPHVEALEEALAQIHIINSALQKRVEAVAADVRTFSEGYIKAIEEHRDKLLKQLEDIRAQKENSLQLQKAQLEQLLADMRTGVEFTEHLLTSGSDLEILITKRVVVERLRKLNKVQYSTRPGVNDKIRFCPQEKAGQCRGYEIYGTINTKEVDPAKCVLQGEDLHRAREKQTASFTLLCKDAAGEIMGRGGDNVQVAVVPKDKKDSPVRTMVQDNKDGTYYISYTPKEPGVYTVWVCIKEQHVQGSPFTVMVRRKHRPHSGVFHCCTFCSSGGQKTARCACGGTMPGGYLGCGHGHKGHPGHPHWSCCGKFNEKSECTWTGGQSAPRSLLRTVAL.

An RING-type zinc finger spans residues 29 to 98 (CPLCLGLFKA…QIGILCPVCD (70 aa)). 2 B box-type zinc fingers span residues 130–176 (GQGL…MVDL) and 186–227 (GKPI…CDFT). Zn(2+) contacts are provided by C135, C138, C158, H162, C191, H194, C214, and H219. Residues 281–335 (SEGYIKAIEEHRDKLLKQLEDIRAQKENSLQLQKAQLEQLLADMRTGVEFTEHLL) adopt a coiled-coil conformation. The Filamin repeat unit spans residues 394–497 (TKEVDPAKCV…VQGSPFTVMV (104 aa)).

The protein belongs to the TRIM/RBCC family. As to expression, expressed in skeletal muscle, brain, heart and pancreas.

Its subcellular location is the cytoplasm. It is found in the nucleus. It carries out the reaction S-ubiquitinyl-[E2 ubiquitin-conjugating enzyme]-L-cysteine + [acceptor protein]-L-lysine = [E2 ubiquitin-conjugating enzyme]-L-cysteine + N(6)-ubiquitinyl-[acceptor protein]-L-lysine.. In terms of biological role, E3 ubiquitin-protein ligase that plays a role in the regulation of inflammatory response. Mechanistically, mediates the 'Lys-48'-linked polyubiquitination of TAB2, a regulatory protein of the kinase TAK1, leading to its degradation via the proteasomal pathway and inhibition of the TLR-mediated inflammatory immune response. May act as a transcriptional repressor in mitogen-activated protein kinase signaling pathway. The polypeptide is E3 ubiquitin-protein ligase TRIM45 (TRIM45) (Homo sapiens (Human)).